Here is a 79-residue protein sequence, read N- to C-terminus: ATP synthase subunit c (79 aa).

2 consecutive transmembrane segments (helical) span residues 11–31 and 53–73; these read MAAA…IGIL and FFIV…LGLY.

This sequence belongs to the ATPase C chain family. As to quaternary structure, F-type ATPases have 2 components, F(1) - the catalytic core - and F(0) - the membrane proton channel. F(1) has five subunits: alpha(3), beta(3), gamma(1), delta(1), epsilon(1). F(0) has three main subunits: a(1), b(2) and c(10-14). The alpha and beta chains form an alternating ring which encloses part of the gamma chain. F(1) is attached to F(0) by a central stalk formed by the gamma and epsilon chains, while a peripheral stalk is formed by the delta and b chains.

The protein localises to the cell inner membrane. Functionally, f(1)F(0) ATP synthase produces ATP from ADP in the presence of a proton or sodium gradient. F-type ATPases consist of two structural domains, F(1) containing the extramembraneous catalytic core and F(0) containing the membrane proton channel, linked together by a central stalk and a peripheral stalk. During catalysis, ATP synthesis in the catalytic domain of F(1) is coupled via a rotary mechanism of the central stalk subunits to proton translocation. Its function is as follows. Key component of the F(0) channel; it plays a direct role in translocation across the membrane. A homomeric c-ring of between 10-14 subunits forms the central stalk rotor element with the F(1) delta and epsilon subunits. The polypeptide is ATP synthase subunit c (Citrobacter koseri (strain ATCC BAA-895 / CDC 4225-83 / SGSC4696)).